A 357-amino-acid chain; its full sequence is RNA 3'-terminal phosphate cyclase (357 aa).

Residues glutamine 102 and 293–296 contribute to the ATP site; that span reads HMGD. Histidine 319 acts as the Tele-AMP-histidine intermediate in catalysis.

This sequence belongs to the RNA 3'-terminal cyclase family. Type 1 subfamily.

It localises to the cytoplasm. The enzyme catalyses a 3'-end 3'-phospho-ribonucleotide-RNA + ATP = a 3'-end 2',3'-cyclophospho-ribonucleotide-RNA + AMP + diphosphate. Its function is as follows. Catalyzes the conversion of 3'-phosphate to a 2',3'-cyclic phosphodiester at the end of RNA. The mechanism of action of the enzyme occurs in 3 steps: (A) adenylation of the enzyme by ATP; (B) transfer of adenylate to an RNA-N3'P to produce RNA-N3'PP5'A; (C) and attack of the adjacent 2'-hydroxyl on the 3'-phosphorus in the diester linkage to produce the cyclic end product. The biological role of this enzyme is unknown but it is likely to function in some aspects of cellular RNA processing. The sequence is that of RNA 3'-terminal phosphate cyclase from Desulfurococcus amylolyticus (strain DSM 18924 / JCM 16383 / VKM B-2413 / 1221n) (Desulfurococcus kamchatkensis).